We begin with the raw amino-acid sequence, 577 residues long: Lysine-specific demethylase 7B (577 aa).

A PHD-type zinc finger spans residues Q5 to H56. The JmjC domain maps to F198–R354. Position 247 (T247) interacts with substrate. Residues H250 and D252 each coordinate Fe cation. K267 serves as a coordination point for substrate. H322 serves as a coordination point for Fe cation. Positions C460–H513 are disordered. Residues H472–H502 are compositionally biased toward basic residues.

The protein belongs to the JHDM1 histone demethylase family. JHDM1D subfamily. The cofactor is Fe(2+). Predominantly expressed in brain.

The protein resides in the nucleus. Its function is as follows. Histone demethylase required for brain development. Specifically demethylates dimethylated 'Lys-9' and 'Lys-27' (H3K9me2 and H3K27me2, respectively) of histone H3 and monomethylated histone H4 'Lys-20' residue (H4K20Me1), thereby playing a central role in histone code. This is Lysine-specific demethylase 7B (jhdm1db) from Danio rerio (Zebrafish).